We begin with the raw amino-acid sequence, 295 residues long: 33 kDa chaperonin (295 aa).

Disulfide bonds link Cys233–Cys235 and Cys267–Cys270.

It belongs to the HSP33 family. Post-translationally, under oxidizing conditions two disulfide bonds are formed involving the reactive cysteines. Under reducing conditions zinc is bound to the reactive cysteines and the protein is inactive.

The protein localises to the cytoplasm. Its function is as follows. Redox regulated molecular chaperone. Protects both thermally unfolding and oxidatively damaged proteins from irreversible aggregation. Plays an important role in the bacterial defense system toward oxidative stress. This Mannheimia succiniciproducens (strain KCTC 0769BP / MBEL55E) protein is 33 kDa chaperonin.